Here is a 628-residue protein sequence, read N- to C-terminus: tRNA uridine 5-carboxymethylaminomethyl modification enzyme MnmG (628 aa).

Residues 14–19 (GAGHAG), Val-126, and Ser-181 contribute to the FAD site. 273–287 (GPRYCPSIEDKVVRF) is a binding site for NAD(+). An FAD-binding site is contributed by Gln-370.

It belongs to the MnmG family. Homodimer. Heterotetramer of two MnmE and two MnmG subunits. FAD is required as a cofactor.

Its subcellular location is the cytoplasm. In terms of biological role, NAD-binding protein involved in the addition of a carboxymethylaminomethyl (cmnm) group at the wobble position (U34) of certain tRNAs, forming tRNA-cmnm(5)s(2)U34. The polypeptide is tRNA uridine 5-carboxymethylaminomethyl modification enzyme MnmG (Pelobacter propionicus (strain DSM 2379 / NBRC 103807 / OttBd1)).